The following is a 342-amino-acid chain: [Citrate [pro-3S]-lyase] ligase (342 aa).

Residues 1–127 enclose the N-acetyltransferase domain; the sequence is MTLILKRVQL…RAVLMENSRE (127 aa).

It carries out the reaction holo-[citrate lyase ACP] + acetate + ATP = acetyl-[citrate lyase ACP] + AMP + diphosphate. In terms of biological role, acetylation of prosthetic group (2-(5''-phosphoribosyl)-3'-dephosphocoenzyme-A) of the gamma subunit of citrate lyase. This Klebsiella pneumoniae protein is [Citrate [pro-3S]-lyase] ligase (citC).